An 88-amino-acid chain; its full sequence is Period circadian protein (88 aa).

Residues 23 to 88 form a disordered region; the sequence is VTNTSIAGTG…VTLTESLLNK (66 aa). 16 consecutive repeat copies span residues 30–31, 33–34, 35–36, 37–38, 39–40, 41–42, 43–44, 45–46, 47–48, 49–50, 51–52, 53–54, 55–56, 57–58, 59–60, and 61–62. Positions 30-62 are 16 X 2 AA tandem repeats of G-[TN]; the sequence is GTGGTGTGTGTGTGTGTGTGTGTGTGTGTGTGN. The segment covering 30 to 62 has biased composition (gly residues); it reads GTGGTGTGTGTGTGTGTGTGTGTGTGTGTGTGN. The span at 79–88 shows a compositional bias: polar residues; it reads VTLTESLLNK.

As to quaternary structure, forms a heterodimer with timeless (TIM); the complex then translocates into the nucleus. Phosphorylated with a circadian rhythmicity, probably by the double-time protein (dbt). Phosphorylation could be implicated in the stability of per monomer and in the formation of heterodimer per-tim.

The protein resides in the nucleus. It localises to the cytoplasm. It is found in the perinuclear region. Essential for biological clock functions. Determines the period length of circadian and ultradian rhythms; an increase in PER dosage leads to shortened circadian rhythms and a decrease leads to lengthened circadian rhythms. Essential for the circadian rhythmicity of locomotor activity, eclosion behavior, and for the rhythmic component of the male courtship song that originates in the thoracic nervous system. The biological cycle depends on the rhythmic formation and nuclear localization of the TIM-PER complex. Light induces the degradation of TIM, which promotes elimination of PER. Nuclear activity of the heterodimer coordinatively regulates PER and TIM transcription through a negative feedback loop. Behaves as a negative element in circadian transcriptional loop. Does not appear to bind DNA, suggesting indirect transcriptional inhibition. This chain is Period circadian protein (per), found in Drosophila teissieri (Fruit fly).